The chain runs to 227 residues: 7-cyano-7-deazaguanine synthase (227 aa).

8–18 (FSGGQDSTTCL) serves as a coordination point for ATP. 4 residues coordinate Zn(2+): C187, C196, C199, and C202.

Belongs to the QueC family. Zn(2+) serves as cofactor.

It carries out the reaction 7-carboxy-7-deazaguanine + NH4(+) + ATP = 7-cyano-7-deazaguanine + ADP + phosphate + H2O + H(+). It participates in purine metabolism; 7-cyano-7-deazaguanine biosynthesis. Functionally, catalyzes the ATP-dependent conversion of 7-carboxy-7-deazaguanine (CDG) to 7-cyano-7-deazaguanine (preQ(0)). The protein is 7-cyano-7-deazaguanine synthase of Aliivibrio salmonicida (strain LFI1238) (Vibrio salmonicida (strain LFI1238)).